Consider the following 263-residue polypeptide: MRQSKKLGQCFLKDKNFVKKAINRAELTDKDIVLEVGLGEGALTKELAKIAKKVYVIELDERLKPFADEITSEFENVEIIWSDALKVDLKTLGFNKIVANLPYQISSPITFKFLEEDFEVAVLMYQYEFAKRMAGKPDTKEYSRLSVAVQYNADVEFICKVPPSAFSPKPDVNSAIVKLTKREPKYHVKDEEFFKKVLKAIFQHRNRTIKRALIDSSHEIGIERNILKEILEKIENKFEFTERVFKTPPEKIGYLSNLLYDEI.

Positions 12, 37, 58, 83, and 100 each coordinate S-adenosyl-L-methionine.

It belongs to the class I-like SAM-binding methyltransferase superfamily. rRNA adenine N(6)-methyltransferase family. RsmA subfamily.

Its subcellular location is the cytoplasm. Its function is as follows. Specifically dimethylates two adjacent adenosines in the loop of a conserved hairpin near the 3'-end of 16S rRNA in the 30S particle. May play a critical role in biogenesis of 30S subunits. In Methanococcus maripaludis (strain C7 / ATCC BAA-1331), this protein is Probable ribosomal RNA small subunit methyltransferase A.